Consider the following 533-residue polypeptide: Glucose-6-phosphate isomerase (533 aa).

The active-site Proton donor is Glu-341. Active-site residues include His-372 and Lys-501.

It belongs to the GPI family.

The protein resides in the cytoplasm. The catalysed reaction is alpha-D-glucose 6-phosphate = beta-D-fructose 6-phosphate. It participates in carbohydrate biosynthesis; gluconeogenesis. It functions in the pathway carbohydrate degradation; glycolysis; D-glyceraldehyde 3-phosphate and glycerone phosphate from D-glucose: step 2/4. In terms of biological role, catalyzes the reversible isomerization of glucose-6-phosphate to fructose-6-phosphate. In Cereibacter sphaeroides (strain KD131 / KCTC 12085) (Rhodobacter sphaeroides), this protein is Glucose-6-phosphate isomerase.